The sequence spans 312 residues: Zinc transporter ZitB (312 aa).

5 helical membrane-spanning segments follow: residues 21–41 (LLFA…GGIL), 48–68 (LADA…LLAV), 90–110 (AAFV…WEAI), 123–143 (LMMV…WILH), and 164–184 (LLGS…GWTP).

It belongs to the cation diffusion facilitator (CDF) transporter (TC 2.A.4) family. SLC30A subfamily.

Its subcellular location is the cell inner membrane. In terms of biological role, involved in zinc efflux across the cytoplasmic membrane, thus reducing zinc accumulation in the cytoplasm and rendering bacteria more resistant to zinc. It may contribute to zinc homeostasis at low concentrations of zinc. The protein is Zinc transporter ZitB of Salmonella typhimurium (strain LT2 / SGSC1412 / ATCC 700720).